The primary structure comprises 593 residues: Phosphoinositide phosphatase SAC6 (593 aa).

The region spanning 128–456 (LSVAERTTGL…GDDISIQYSG (329 aa)) is the SAC domain. The Phosphatase catalytic core motif lies at 391-402 (RTNCIDCLDRTN). 2 helical membrane passes run 526–546 (AVAN…FATM) and 555–575 (YKHL…AALV).

As to expression, predominantly expressed in flowers.

It is found in the endoplasmic reticulum membrane. Its function is as follows. Phosphoinositide phosphatase that hydrolyzes PtdIns(3)P and PtdIns(4)P. Involved in priming for different defense responses. The polypeptide is Phosphoinositide phosphatase SAC6 (SAC6) (Arabidopsis thaliana (Mouse-ear cress)).